The chain runs to 153 residues: Aspartate carbamoyltransferase regulatory chain (153 aa).

Zn(2+)-binding residues include C110, C115, C138, and C141.

It belongs to the PyrI family. As to quaternary structure, contains catalytic and regulatory chains. Zn(2+) is required as a cofactor.

Involved in allosteric regulation of aspartate carbamoyltransferase. The sequence is that of Aspartate carbamoyltransferase regulatory chain from Bacteroides fragilis (strain ATCC 25285 / DSM 2151 / CCUG 4856 / JCM 11019 / LMG 10263 / NCTC 9343 / Onslow / VPI 2553 / EN-2).